The sequence spans 1177 residues: Lysylphosphatidylglycerol biosynthesis bifunctional protein LysX (1177 aa).

Disordered regions lie at residues 1-40 (MRRA…AKFV) and 61-85 (VTLA…PANR). Residues 1-676 (MRRAGRSRQF…LLHHDGSAPD (676 aa)) form a phosphatidylglycerol lysyltransferase region. Positions 8 to 21 (RQFSSVEEAFSTSA) are enriched in polar residues. The span at 65 to 82 (SPGSRSGSGPRSGPRLGP) shows a compositional bias: low complexity. 6 helical membrane passes run 93 to 113 (VPAA…LGSV), 135 to 155 (FPDT…ALTA), 159 to 179 (IAWL…VADI), 189 to 209 (IFGE…LVLA), 227 to 247 (AVLV…VELF), and 281 to 301 (VFLN…ATIV). The disordered stretch occupies residues 673-693 (SAPDVSGLRPERTDAEEARSR). Residues 677–1177 (VSGLRPERTD…TLPFPLAKPH (501 aa)) are lysine--tRNA ligase. Basic and acidic residues predominate over residues 681–693 (RPERTDAEEARSR). Residues Asp1089 and Glu1096 each contribute to the Mg(2+) site.

This sequence in the N-terminal section; belongs to the LPG synthetase family. It in the C-terminal section; belongs to the class-II aminoacyl-tRNA synthetase family. Mg(2+) serves as cofactor.

Its subcellular location is the cell membrane. It catalyses the reaction tRNA(Lys) + L-lysine + ATP = L-lysyl-tRNA(Lys) + AMP + diphosphate. It carries out the reaction L-lysyl-tRNA(Lys) + a 1,2-diacyl-sn-glycero-3-phospho-(1'-sn-glycerol) = a 1,2-diacyl-sn-glycero-3-phospho-1'-(3'-O-L-lysyl)-sn-glycerol + tRNA(Lys). Catalyzes the production of L-lysyl-tRNA(Lys)transfer and the transfer of a lysyl group from L-lysyl-tRNA(Lys) to membrane-bound phosphatidylglycerol (PG), which produces lysylphosphatidylglycerol (LPG), one of the components of the bacterial membrane with a positive net charge. LPG synthesis contributes to the resistance to cationic antimicrobial peptides (CAMPs) and likely protects M.tuberculosis against the CAMPs produced by competiting microorganisms (bacteriocins). In fact, the modification of anionic phosphatidylglycerol with positively charged L-lysine results in repulsion of the peptides. The polypeptide is Lysylphosphatidylglycerol biosynthesis bifunctional protein LysX (lysX) (Mycobacterium avium (strain 104)).